The chain runs to 444 residues: Probable polygalacturonase At1g80170 (444 aa).

A signal peptide spans 1 to 28 (MSYSRGGTLVTLLLLLVVASSLALTANA). PbH1 repeat units follow at residues 208 to 234 (CRRV…HISV), 235 to 256 (SRGI…SIVK), 258 to 278 (STQI…SIGS), 288 to 309 (VRDI…RIKT), 317 to 338 (VSKI…IIDQ), and 351 to 378 (TSAI…KISC). Catalysis depends on D249, which acts as the Proton donor. The active site involves H272.

It belongs to the glycosyl hydrolase 28 family. Expressed in young, mature and dehiscing anthers. Found in stems, but not in roots or in abscission zone of floral organs.

It is found in the secreted. Its subcellular location is the cell wall. The catalysed reaction is (1,4-alpha-D-galacturonosyl)n+m + H2O = (1,4-alpha-D-galacturonosyl)n + (1,4-alpha-D-galacturonosyl)m.. This Arabidopsis thaliana (Mouse-ear cress) protein is Probable polygalacturonase At1g80170.